Here is a 382-residue protein sequence, read N- to C-terminus: D-galactonate dehydratase (382 aa).

Asp183 lines the Mg(2+) pocket. His185 functions as the Proton donor in the catalytic mechanism. Glu209 and Glu235 together coordinate Mg(2+). His285 (proton acceptor) is an active-site residue.

It belongs to the mandelate racemase/muconate lactonizing enzyme family. GalD subfamily. Mg(2+) is required as a cofactor.

The catalysed reaction is D-galactonate = 2-dehydro-3-deoxy-D-galactonate + H2O. It participates in carbohydrate acid metabolism; D-galactonate degradation; D-glyceraldehyde 3-phosphate and pyruvate from D-galactonate: step 1/3. Functionally, catalyzes the dehydration of D-galactonate to 2-keto-3-deoxy-D-galactonate. The polypeptide is D-galactonate dehydratase (Escherichia coli O9:H4 (strain HS)).